The primary structure comprises 353 residues: Farnesyl pyrophosphate synthase (353 aa).

3 residues coordinate isopentenyl diphosphate: Lys57, Arg60, and Gln96. Lys57 is modified (N6-(2-hydroxyisobutyryl)lysine; alternate). At Lys57 the chain carries N6-acetyllysine; alternate. The Mg(2+) site is built by Asp103 and Asp107. Arg112 lines the dimethylallyl diphosphate pocket. Arg113 is an isopentenyl diphosphate binding site. The dimethylallyl diphosphate site is built by Lys200, Thr201, Gln240, Lys257, and Lys266.

The protein belongs to the FPP/GGPP synthase family. Homodimer. Interacts with RSAD2. Interacts with bovine leukemia virus (BLV) protein G4. The cofactor is Mg(2+).

The protein localises to the cytoplasm. The enzyme catalyses isopentenyl diphosphate + dimethylallyl diphosphate = (2E)-geranyl diphosphate + diphosphate. It carries out the reaction isopentenyl diphosphate + (2E)-geranyl diphosphate = (2E,6E)-farnesyl diphosphate + diphosphate. It participates in isoprenoid biosynthesis; farnesyl diphosphate biosynthesis; farnesyl diphosphate from geranyl diphosphate and isopentenyl diphosphate: step 1/1. Its pathway is isoprenoid biosynthesis; geranyl diphosphate biosynthesis; geranyl diphosphate from dimethylallyl diphosphate and isopentenyl diphosphate: step 1/1. Inactivated by interferon-induced RSAD2. This inactivation may result of disruption of lipid rafts at the plasma membrane, and thus have an antiviral effect since many enveloped viruses need lipid rafts to bud efficiently out of the cell. Its function is as follows. Key enzyme in isoprenoid biosynthesis which catalyzes the formation of farnesyl diphosphate (FPP), a precursor for several classes of essential metabolites including sterols, dolichols, carotenoids, and ubiquinones. FPP also serves as substrate for protein farnesylation and geranylgeranylation. Catalyzes the sequential condensation of isopentenyl pyrophosphate with the allylic pyrophosphates, dimethylallyl pyrophosphate, and then with the resultant geranylpyrophosphate to the ultimate product farnesyl pyrophosphate. The sequence is that of Farnesyl pyrophosphate synthase (FDPS) from Bos taurus (Bovine).